Here is a 438-residue protein sequence, read N- to C-terminus: tRNA-2-methylthio-N(6)-dimethylallyladenosine synthase (438 aa).

In terms of domain architecture, MTTase N-terminal spans 2 to 118; the sequence is KSFYLETFGC…LADMVRDAEL (117 aa). The [4Fe-4S] cluster site is built by cysteine 11, cysteine 47, cysteine 81, cysteine 157, cysteine 161, and cysteine 164. A Radical SAM core domain is found at 143-373; sequence PSAEVSRFVT…LALQEEITRQ (231 aa). The region spanning 376–438 is the TRAM domain; sequence QMDIGQVLPV…YRNSHLGERV (63 aa).

This sequence belongs to the methylthiotransferase family. MiaB subfamily. Monomer. [4Fe-4S] cluster is required as a cofactor.

It localises to the cytoplasm. The catalysed reaction is N(6)-dimethylallyladenosine(37) in tRNA + (sulfur carrier)-SH + AH2 + 2 S-adenosyl-L-methionine = 2-methylsulfanyl-N(6)-dimethylallyladenosine(37) in tRNA + (sulfur carrier)-H + 5'-deoxyadenosine + L-methionine + A + S-adenosyl-L-homocysteine + 2 H(+). Functionally, catalyzes the methylthiolation of N6-(dimethylallyl)adenosine (i(6)A), leading to the formation of 2-methylthio-N6-(dimethylallyl)adenosine (ms(2)i(6)A) at position 37 in tRNAs that read codons beginning with uridine. This chain is tRNA-2-methylthio-N(6)-dimethylallyladenosine synthase, found in Syntrophotalea carbinolica (strain DSM 2380 / NBRC 103641 / GraBd1) (Pelobacter carbinolicus).